Reading from the N-terminus, the 355-residue chain is Protein RecA (355 aa).

67-74 contacts ATP; that stretch reads GPESSGKT.

The protein belongs to the RecA family.

The protein resides in the cytoplasm. Can catalyze the hydrolysis of ATP in the presence of single-stranded DNA, the ATP-dependent uptake of single-stranded DNA by duplex DNA, and the ATP-dependent hybridization of homologous single-stranded DNAs. It interacts with LexA causing its activation and leading to its autocatalytic cleavage. This Proteus mirabilis (strain HI4320) protein is Protein RecA.